The sequence spans 172 residues: Translocon-associated protein subunit delta (172 aa).

The N-terminal stretch at 1 to 24 (MAALASLGALALLLLSGLSCCSEA) is a signal peptide. An intrachain disulfide couples cysteine 25 to cysteine 56. Over 25–143 (CVEPQITPSY…SVDHRGTWNG (119 aa)) the chain is Lumenal. Residue lysine 72 forms a Glycyl lysine isopeptide (Lys-Gly) (interchain with G-Cter in ubiquitin) linkage. The chain crosses the membrane as a helical span at residues 144–164 (PWVSTEVLAAAIGLVIYYLAF). Residues 165 to 172 (SAKSHIQA) are Cytoplasmic-facing.

It belongs to the TRAP-delta family. Heterotetramer of TRAP-alpha, TRAP-beta, TRAP-delta and TRAP-gamma.

It localises to the endoplasmic reticulum membrane. Its function is as follows. TRAP proteins are part of a complex whose function is to bind calcium to the ER membrane and thereby regulate the retention of ER resident proteins. This chain is Translocon-associated protein subunit delta (SSR4), found in Bos taurus (Bovine).